Reading from the N-terminus, the 236-residue chain is tRNA1(Val) (adenine(37)-N6)-methyltransferase (236 aa).

Belongs to the methyltransferase superfamily. tRNA (adenine-N(6)-)-methyltransferase family.

The protein resides in the cytoplasm. It catalyses the reaction adenosine(37) in tRNA1(Val) + S-adenosyl-L-methionine = N(6)-methyladenosine(37) in tRNA1(Val) + S-adenosyl-L-homocysteine + H(+). In terms of biological role, specifically methylates the adenine in position 37 of tRNA(1)(Val) (anticodon cmo5UAC). The protein is tRNA1(Val) (adenine(37)-N6)-methyltransferase of Actinobacillus pleuropneumoniae serotype 5b (strain L20).